The sequence spans 92 residues: Putative septation protein SpoVG (92 aa).

The protein belongs to the SpoVG family.

Its function is as follows. Could be involved in septation. The polypeptide is Putative septation protein SpoVG (Thermoanaerobacter sp. (strain X514)).